We begin with the raw amino-acid sequence, 595 residues long: Apolipoprotein N-acyltransferase 2 (595 aa).

A run of 5 helical transmembrane segments spans residues Phe-30–Phe-50, Leu-63–Ile-83, Val-95–Phe-115, Ala-167–Phe-187, and Phe-210–Lys-230. Positions Leu-241 to Val-555 constitute a CN hydrolase domain. Glu-293 (proton acceptor) is an active-site residue. Lys-372 is an active-site residue. The active-site Nucleophile is the Cys-463. A helical transmembrane segment spans residues Leu-569–Ile-589.

Belongs to the CN hydrolase family. Apolipoprotein N-acyltransferase subfamily.

The protein resides in the cell inner membrane. The enzyme catalyses N-terminal S-1,2-diacyl-sn-glyceryl-L-cysteinyl-[lipoprotein] + a glycerophospholipid = N-acyl-S-1,2-diacyl-sn-glyceryl-L-cysteinyl-[lipoprotein] + a 2-acyl-sn-glycero-3-phospholipid + H(+). It functions in the pathway protein modification; lipoprotein biosynthesis (N-acyl transfer). Functionally, catalyzes the phospholipid dependent N-acylation of the N-terminal cysteine of apolipoprotein, the last step in lipoprotein maturation. In Leptospira interrogans serogroup Icterohaemorrhagiae serovar copenhageni (strain Fiocruz L1-130), this protein is Apolipoprotein N-acyltransferase 2.